The primary structure comprises 377 residues: Probable multidrug ABC transporter permease YbhS (377 aa).

At 1–28 the chain is on the cytoplasmic side; it reads MSNPILSWRRVRALCVKETRQIVRDPSS. The helical transmembrane segment at 29 to 49 threads the bilayer; the sequence is WLIAVVIPLLLLFIFGYGINL. Topologically, residues 50-181 are periplasmic; it reads DSSKLRVGIL…WFNPAAISQH (132 aa). The ABC transmembrane type-2 domain maps to 145–375; the sequence is IWQIWQMQRA…GLTWLKTKRR (231 aa). A helical membrane pass occupies residues 182 to 202; that stretch reads FIIPGAVTIIMTVIGAILTSL. The Cytoplasmic segment spans residues 203 to 234; it reads VVAREWERGTMEALLSTEITRTELLLCKLIPY. A helical transmembrane segment spans residues 235–255; sequence YFLGMLAMLLCMLVSVFILGV. The Periplasmic portion of the chain corresponds to 256–261; it reads PYRGSL. A helical transmembrane segment spans residues 262-282; that stretch reads LILFFISSLFLLSTLGMGLLI. Over 283–291 the chain is Cytoplasmic; that stretch reads STITRNQFN. Residues 292 to 312 traverse the membrane as a helical segment; the sequence is AAQVALNAAFLPSIMLSGFIF. Over 313 to 345 the chain is Periplasmic; that stretch reads QIDSMPAVIRAVTYIIPARYFVSTLQSLFLAGN. A helical membrane pass occupies residues 346 to 366; the sequence is IPVVLVVNVLFLIASAVMFIG. Topologically, residues 367 to 377 are cytoplasmic; it reads LTWLKTKRRLD.

The protein belongs to the ABC-2 integral membrane protein family. In terms of assembly, the complex is probably composed of two ATP-binding proteins (YbhF) and two transmembrane proteins (YbhR and YbhS).

The protein resides in the cell inner membrane. In terms of biological role, part of the ABC transporter complex YbhFSR that could be involved in efflux of cefoperazone. Probably involved in the translocation of the substrate across the membrane. The sequence is that of Probable multidrug ABC transporter permease YbhS (ybhS) from Escherichia coli O157:H7.